The following is a 142-amino-acid chain: Large ribosomal subunit protein uL13 (142 aa).

Belongs to the universal ribosomal protein uL13 family. In terms of assembly, part of the 50S ribosomal subunit.

Functionally, this protein is one of the early assembly proteins of the 50S ribosomal subunit, although it is not seen to bind rRNA by itself. It is important during the early stages of 50S assembly. The chain is Large ribosomal subunit protein uL13 from Stenotrophomonas maltophilia (strain R551-3).